A 325-amino-acid polypeptide reads, in one-letter code: Heat-inducible transcription repressor HrcA (325 aa).

Belongs to the HrcA family.

Functionally, negative regulator of class I heat shock genes (grpE-dnaK-dnaJ and groELS operons). Prevents heat-shock induction of these operons. The chain is Heat-inducible transcription repressor HrcA from Staphylococcus aureus (strain MRSA252).